Reading from the N-terminus, the 213-residue chain is tRNA (guanine-N(7)-)-methyltransferase (213 aa).

S-adenosyl-L-methionine contacts are provided by glutamate 44, glutamate 69, aspartate 96, and aspartate 118. The active site involves aspartate 118. Residues lysine 122, aspartate 154, and 191–194 (TEYE) each bind substrate.

This sequence belongs to the class I-like SAM-binding methyltransferase superfamily. TrmB family.

It carries out the reaction guanosine(46) in tRNA + S-adenosyl-L-methionine = N(7)-methylguanosine(46) in tRNA + S-adenosyl-L-homocysteine. It functions in the pathway tRNA modification; N(7)-methylguanine-tRNA biosynthesis. In terms of biological role, catalyzes the formation of N(7)-methylguanine at position 46 (m7G46) in tRNA. This chain is tRNA (guanine-N(7)-)-methyltransferase, found in Exiguobacterium sibiricum (strain DSM 17290 / CCUG 55495 / CIP 109462 / JCM 13490 / 255-15).